A 95-amino-acid chain; its full sequence is Aspartyl/glutamyl-tRNA(Asn/Gln) amidotransferase subunit C (95 aa).

It belongs to the GatC family. As to quaternary structure, heterotrimer of A, B and C subunits.

The catalysed reaction is L-glutamyl-tRNA(Gln) + L-glutamine + ATP + H2O = L-glutaminyl-tRNA(Gln) + L-glutamate + ADP + phosphate + H(+). It catalyses the reaction L-aspartyl-tRNA(Asn) + L-glutamine + ATP + H2O = L-asparaginyl-tRNA(Asn) + L-glutamate + ADP + phosphate + 2 H(+). Functionally, allows the formation of correctly charged Asn-tRNA(Asn) or Gln-tRNA(Gln) through the transamidation of misacylated Asp-tRNA(Asn) or Glu-tRNA(Gln) in organisms which lack either or both of asparaginyl-tRNA or glutaminyl-tRNA synthetases. The reaction takes place in the presence of glutamine and ATP through an activated phospho-Asp-tRNA(Asn) or phospho-Glu-tRNA(Gln). The protein is Aspartyl/glutamyl-tRNA(Asn/Gln) amidotransferase subunit C of Methylobacillus flagellatus (strain ATCC 51484 / DSM 6875 / VKM B-1610 / KT).